The following is a 106-amino-acid chain: MSKLYEWIIPESDVLDKEEVQVKPPAMYKVVLNNDDYTPMDFVIEVLQKFFSMDMEKATQLMLNVHYEGKAICGTFTAEVAETKVAQVMMHARENEHPLLCTMEKA.

This sequence belongs to the ClpS family. As to quaternary structure, binds to the N-terminal domain of the chaperone ClpA.

In terms of biological role, involved in the modulation of the specificity of the ClpAP-mediated ATP-dependent protein degradation. The polypeptide is ATP-dependent Clp protease adapter protein ClpS (Photobacterium profundum (strain SS9)).